The chain runs to 131 residues: Large ribosomal subunit protein bL17 (131 aa).

It belongs to the bacterial ribosomal protein bL17 family. Part of the 50S ribosomal subunit. Contacts protein L32.

The protein is Large ribosomal subunit protein bL17 of Vesicomyosocius okutanii subsp. Calyptogena okutanii (strain HA).